The primary structure comprises 179 residues: Adenine phosphoribosyltransferase (179 aa).

Belongs to the purine/pyrimidine phosphoribosyltransferase family. As to quaternary structure, homodimer.

The protein localises to the cytoplasm. The catalysed reaction is AMP + diphosphate = 5-phospho-alpha-D-ribose 1-diphosphate + adenine. It participates in purine metabolism; AMP biosynthesis via salvage pathway; AMP from adenine: step 1/1. Functionally, catalyzes a salvage reaction resulting in the formation of AMP, that is energically less costly than de novo synthesis. The polypeptide is Adenine phosphoribosyltransferase (Jannaschia sp. (strain CCS1)).